We begin with the raw amino-acid sequence, 520 residues long: Genome polyprotein (520 aa).

Ser2 is modified (N-acetylserine; by host). An interaction with STAT1 region spans residues 2-23; that stretch reads STNPKPQRKTKRNTNRRPQDVK. An interaction with EIF2AK2/PKR region spans residues 2 to 58; the sequence is STNPKPQRKTKRNTNRRPQDVKFPGGGQIVGGVYLLTRRGPRLGVRATRKTSERSQP. Residues 2-59 are interaction with DDX3X; sequence STNPKPQRKTKRNTNRRPQDVKFPGGGQIVGGVYLLTRRGPRLGVRATRKTSERSQPR. The tract at residues 2-75 is disordered; that stretch reads STNPKPQRKT…PKARRPEGRA (74 aa). The Cytoplasmic portion of the chain corresponds to 2-168; sequence STNPKPQRKT…EDGVNYATGN (167 aa). Short sequence motifs (nuclear localization signal) lie at residues 5–13 and 38–43; these read PKPQRKTKR and TRRGPR. Basic residues predominate over residues 7–16; that stretch reads PQRKTKRNTN. At Ser53 the chain carries Phosphoserine; by host. Short sequence motifs (nuclear localization signal) lie at residues 58–64 and 66–71; these read PRGRRQP and PKARRP. Residues 58 to 68 are compositionally biased toward basic residues; sequence PRGRRQPIPKA. Ser99 carries the phosphoserine; by host modification. The important for endoplasmic reticulum and mitochondrial localization stretch occupies residues 112–152; the sequence is PRRRSRNLGKVIDTLTCGFADLMGYIPLVGAPLGGASRALA. The residue at position 116 (Ser116) is a Phosphoserine; by host PKA. Residues 122–173 are interaction with APOA2; the sequence is VIDTLTCGFADLMGYIPLVGAPLGGASRALAHGVRVLEDGVNYATGNLPGCS. Positions 164 to 167 are important for lipid droplets localization; it reads YATG. A helical membrane pass occupies residues 169–189; sequence LPGCSFSIFLSALMSCLTTPA. A propeptide spans 178–191 (ER anchor for the core protein, removed in mature form by host signal peptidase); the sequence is LSALMSCLTTPASA. At 190 to 358 the chain is on the lumenal side; that stretch reads SAYEVRNVSG…AGAHWGVLAG (169 aa). Asn196, Asn209, Asn234, and Asn250 each carry an N-linked (GlcNAc...) asparagine; by host glycan. The segment at 265-296 is important for fusion; that stretch reads LVGAATLCSAMYVGDLCGSVFLVSQLFTFSPR. Asn305 carries an N-linked (GlcNAc...) asparagine; by host glycan. A helical transmembrane segment spans residues 359–379; sequence LAYYSMVGNWAKVLIVMLLFA. Residues 380–520 lie on the Lumenal side of the membrane; it reads GVDGANTHTV…TPSPVVVGTT (141 aa). An HVR1 region spans residues 385–411; the sequence is NTHTVGGTEGFATQRLTSLFALGPSQK. An N-linked (GlcNAc...) asparagine; by host glycan is attached at Asn418. N-linked (GlcNAc...) (high mannose) asparagine; by host glycans are attached at residues Asn424, Asn431, and Asn449. A disulfide bridge links Cys453 with Cys460. The tract at residues 474-479 is HVR2; that stretch reads TYAEPS. The segment at 480–493 is CD81-binding 1; sequence ISEQRPYCWHYAPR. Disulfide bonds link Cys487/Cys495 and Cys504/Cys509.

Belongs to the hepacivirus polyprotein family. In terms of assembly, homooligomer. Interacts with E1 (via C-terminus). Interacts with the non-structural protein 5A. Interacts (via N-terminus) with host STAT1 (via SH2 domain); this interaction results in decreased STAT1 phosphorylation and ubiquitin-mediated proteasome-dependent STAT1 degradation, leading to decreased IFN-stimulated gene transcription. Interacts with host STAT3; this interaction constitutively activates STAT3. Interacts with host LTBR receptor. Interacts with host TNFRSF1A receptor and possibly induces apoptosis. Interacts with host HNRPK. Interacts with host YWHAE. Interacts with host UBE3A/E6AP. Interacts with host DDX3X. Interacts with host APOA2. Interacts with host RXRA protein. Interacts with host SP110 isoform 3/Sp110b; this interaction sequesters the transcriptional corepressor SP110 away from the nucleus. Interacts with host CREB3 nuclear transcription protein; this interaction triggers cell transformation. Interacts with host ACY3. Interacts with host C1QR1. Interacts with host RBM24; this interaction, which enhances the interaction of the mature core protein with 5'-UTR, may inhibit viral translation and favor replication. Interacts with host EIF2AK2/PKR; this interaction induces the autophosphorylation of EIF2AK2. Part of the viral assembly initiation complex composed of NS2, E1, E2, NS3, NS4A, NS5A and the mature core protein. Forms a heterodimer with envelope glycoprotein E2. Interacts with mature core protein. Interacts with protease NS2. The heterodimer E1/E2 interacts with host CLDN1; this interaction plays a role in viral entry into host cell. Interacts with host SPSB2 (via C-terminus). Part of the viral assembly initiation complex composed of NS2, E1, E2, NS3, NS4A, NS5A and the mature core protein. As to quaternary structure, forms a heterodimer with envelope glycoprotein E1. Interacts with host CD81 and SCARB1 receptors; these interactions play a role in viral entry into host cell. Interacts with host EIF2AK2/PKR; this interaction inhibits EIF2AK2 and probably allows the virus to evade the innate immune response. Interacts with host CD209/DC-SIGN and CLEC4M/DC-SIGNR. Interact with host SPCS1; this interaction is essential for viral particle assembly. Interacts with protease NS2. The heterodimer E1/E2 interacts with host CLDN1; this interaction plays a role in viral entry into host cell. Part of the viral assembly initiation complex composed of NS2, E1, E2, NS3, NS4A, NS5A and the mature core protein. Post-translationally, specific enzymatic cleavages in vivo yield mature proteins. The structural proteins, core, E1, E2 and p7 are produced by proteolytic processing by host signal peptidases. The core protein precursor is synthesized as a 23 kDa, which is retained in the ER membrane through the hydrophobic signal peptide. Cleavage by the signal peptidase releases the 21 kDa mature core protein. The cleavage of the core protein precursor occurs between aminoacids 176 and 188 but the exact cleavage site is not known. Some degraded forms of the core protein appear as well during the course of infection. The other proteins (p7, NS2, NS3, NS4A, NS4B, NS5A and NS5B) are cleaved by the viral proteases. Autoprocessing between NS2 and NS3 is mediated by the NS2 cysteine protease catalytic domain and regulated by the NS3 N-terminal domain. Phosphorylated by host PKC and PKA. In terms of processing, ubiquitinated; mediated by UBE3A and leading to core protein subsequent proteasomal degradation. Post-translationally, highly N-glycosylated.

Its subcellular location is the host endoplasmic reticulum membrane. It localises to the host mitochondrion membrane. The protein localises to the virion. It is found in the host cytoplasm. The protein resides in the host nucleus. Its subcellular location is the host lipid droplet. It localises to the virion membrane. Packages viral RNA to form a viral nucleocapsid, and promotes virion budding. Participates in the viral particle production as a result of its interaction with the non-structural protein 5A. Binds RNA and may function as a RNA chaperone to induce the RNA structural rearrangements taking place during virus replication. Modulates viral translation initiation by interacting with viral IRES and 40S ribosomal subunit. Affects various cell signaling pathways, host immunity and lipid metabolism. Prevents the establishment of cellular antiviral state by blocking the interferon-alpha/beta (IFN-alpha/beta) and IFN-gamma signaling pathways and by blocking the formation of phosphorylated STAT1 and promoting ubiquitin-mediated proteasome-dependent degradation of STAT1. Activates STAT3 leading to cellular transformation. Regulates the activity of cellular genes, including c-myc and c-fos. May repress the promoter of p53, and sequester CREB3 and SP110 isoform 3/Sp110b in the cytoplasm. Represses cell cycle negative regulating factor CDKN1A, thereby interrupting an important check point of normal cell cycle regulation. Targets transcription factors involved in the regulation of inflammatory responses and in the immune response: suppresses TNF-induced NF-kappa-B activation, and activates AP-1. Binds to dendritic cells (DCs) via C1QR1, resulting in down-regulation of T-lymphocytes proliferation. Alters lipid metabolism by interacting with hepatocellular proteins involved in lipid accumulation and storage. Induces up-regulation of FAS promoter activity, and thereby contributes to the increased triglyceride accumulation in hepatocytes (steatosis). Functionally, forms a heterodimer with envelope glycoprotein E2, which mediates virus attachment to the host cell, virion internalization through clathrin-dependent endocytosis and fusion with host membrane. Fusion with the host cell is most likely mediated by both E1 and E2, through conformational rearrangements of the heterodimer required for fusion rather than a classical class II fusion mechanism. E1/E2 heterodimer binds host apolipoproteins such as APOB and ApoE thereby forming a lipo-viro-particle (LVP). APOE associated to the LVP allows the initial virus attachment to cell surface receptors such as the heparan sulfate proteoglycans (HSPGs), syndecan-1 (SDC1), syndecan-1 (SDC2), the low-density lipoprotein receptor (LDLR) and scavenger receptor class B type I (SCARB1). The cholesterol transfer activity of SCARB1 allows E2 exposure and binding of E2 to SCARB1 and the tetraspanin CD81. E1/E2 heterodimer binding on CD81 activates the epithelial growth factor receptor (EGFR) signaling pathway. Diffusion of the complex E1-E2-EGFR-SCARB1-CD81 to the cell lateral membrane allows further interaction with Claudin 1 (CLDN1) and occludin (OCLN) to finally trigger HCV entry. In terms of biological role, forms a heterodimer with envelope glycoprotein E1, which mediates virus attachment to the host cell, virion internalization through clathrin-dependent endocytosis and fusion with host membrane. Fusion with the host cell is most likely mediated by both E1 and E2, through conformational rearrangements of the heterodimer required for fusion rather than a classical class II fusion mechanism. The interaction between envelope glycoprotein E2 and host apolipoprotein E/APOE allows the proper assembly, maturation and infectivity of the viral particles. This interaction is probably promoted via the up-regulation of cellular autophagy by the virus. E1/E2 heterodimer binds host apolipoproteins such as APOB and APOE thereby forming a lipo-viro-particle (LVP). APOE associated to the LVP allows the initial virus attachment to cell surface receptors such as the heparan sulfate proteoglycans (HSPGs), syndecan-1 (SDC1), syndecan-1 (SDC2), the low-density lipoprotein receptor (LDLR) and scavenger receptor class B type I (SCARB1). The cholesterol transfer activity of SCARB1 allows E2 exposure and binding of E2 to SCARB1 and the tetraspanin CD81. E1/E2 heterodimer binding on CD81 activates the epithelial growth factor receptor (EGFR) signaling pathway. Diffusion of the complex E1-E2-EGFR-SCARB1-CD81 to the cell lateral membrane allows further interaction with Claudin 1 (CLDN1) and occludin (OCLN) to finally trigger HCV entry. Inhibits host EIF2AK2/PKR activation, preventing the establishment of an antiviral state. Viral ligand for CD209/DC-SIGN and CLEC4M/DC-SIGNR, which are respectively found on dendritic cells (DCs), and on liver sinusoidal endothelial cells and macrophage-like cells of lymph node sinuses. These interactions allow the capture of circulating HCV particles by these cells and subsequent facilitated transmission to permissive cells such as hepatocytes and lymphocyte subpopulations. The protein is Genome polyprotein of Hepatitis C virus (isolate HCV-KF) (HCV).